A 791-amino-acid polypeptide reads, in one-letter code: MAASALQQPSYLLANLKADWTNKPLHQRCHELCKIIDDYPAKELHAIFPWLVECVFGSLDGILTGWNLRFLQARSAEYSIAMEFLDPSGPMMKLVYKLQAEEYKYEFPISYLPGPIKSSIHAGVLPDCPLFHNKIQFPMSGLLFLNPFEYYMFNFASSLIAPKNYPQGQHGSSSDSAYFVLVDTYLKYFLPTEGNVPPSPFSDTRGTVASPAPRSTNVPYVGYGGHSTSLLKRHITHQSSVNADPAAQEIWRSETLLQVFVEMWLHHYSLEMYQKLQSPQVKEPFMPSEEHVLVVRLLVKHLHTFSSSLKPESISSSPSAHSHSSPLEELKRVVVQRFVQQKLYVFLQHCFGHWPLDASFRAVLETWLSYIQPWRYTGDKNNTQTDGPNRTVPDKWASFVQENLLLYTKLFQGFLNRAMRTDLVNAKNALMVFRVAKVFAQPSLSEMIQKGEQLFLEPEHAILQRHNRVFLTPSHGGSFLSARQPMGTDNVFKVKSHVYSLEGQDCQYNLMFGPDQRKNVLKLIQIIAQARQTAKRISDHSTEMAANNSFLSWFGVGSPDHNSTFTGGEMDEMGGEGVKKTHEFLDKALDYLCQIFRLNAGQLSQLISNVASVDNNGASKQLPDCIPSENGLVLTDLGRLQIINGLRRFEIEYQGDPELQPIRSYENAFLVRLLFQISSFINERLGEHMEVLCSRQDFLGSVGRHYLSSSSAVVEQRRKSPVTRQMRDRPQRARLSLRALASYRTLLTLLLLYMLFALLSFGLFSSTGLILIISFLYELLSNFFHEKLKTH.

A helical membrane pass occupies residues 755–775 (LFALLSFGLFSSTGLILIISF).

Mg(2+) serves as cofactor.

Its subcellular location is the endoplasmic reticulum membrane. It localises to the golgi apparatus membrane. The protein localises to the nucleus envelope. The protein resides in the cell membrane. It is found in the sarcolemma. It carries out the reaction a sphingomyelin + H2O = phosphocholine + an N-acylsphing-4-enine + H(+). Its function is as follows. Catalyzes the hydrolysis of membrane sphingomyelin to form phosphorylcholine and ceramide. It has a relevant role in the homeostasis of membrane sphingolipids, thereby influencing membrane integrity, and endoplasmic reticulum organization and function. May sensitize cells to DNA damage-induced apoptosis. The sequence is that of Sphingomyelin phosphodiesterase 4 (smpd4) from Danio rerio (Zebrafish).